We begin with the raw amino-acid sequence, 380 residues long: Cytochrome b (380 aa).

The next 4 helical transmembrane spans lie at 33-53 (FGSL…FLAM), 77-98 (WLIR…YLHV), 113-133 (WNIG…GYVL), and 178-198 (FFAF…IHLL). Heme b contacts are provided by H83 and H97. Heme b contacts are provided by H182 and H196. An a ubiquinone-binding site is contributed by H201. The next 4 membrane-spanning stretches (helical) occupy residues 226 to 246 (YKDL…ALFS), 288 to 308 (LGGV…PMLH), 320 to 340 (LSQI…WIGG), and 347 to 367 (FVLI…IALP).

The protein belongs to the cytochrome b family. As to quaternary structure, the cytochrome bc1 complex contains 3 respiratory subunits (MT-CYB, CYC1 and UQCRFS1), 2 core proteins (UQCRC1 and UQCRC2) and probably 6 low-molecular weight proteins. Requires heme b as cofactor.

The protein resides in the mitochondrion inner membrane. Functionally, component of the ubiquinol-cytochrome c reductase complex (complex III or cytochrome b-c1 complex) that is part of the mitochondrial respiratory chain. The b-c1 complex mediates electron transfer from ubiquinol to cytochrome c. Contributes to the generation of a proton gradient across the mitochondrial membrane that is then used for ATP synthesis. This chain is Cytochrome b (mt-cyb), found in Acipenser persicus (Persian sturgeon).